A 237-amino-acid polypeptide reads, in one-letter code: MTHLRRSTSPEWWPVERKGAPWSIKPSPGPHPANSSIPLAVLLRDVFHYAKTLREARLIIGKGYVKVDGKVRRDYKYPVGLMDVIELTPINEYYRIIPDPVNFLRPIRIDKSEAGVKVCRIEDKTMVKAGKIQLNLHDGRNIIVDQDEGRKYETLGSVVVNLEDGKLMDYYPMQPNQYVIAFNGVNVGRHGTLINWVRSFRKRDAIATVKAKDSEFRTVLNYLLVIGKESPVVKVTE.

In terms of domain architecture, S4 RNA-binding spans 37 to 100 (IPLAVLLRDV…NEYYRIIPDP (64 aa)).

It belongs to the eukaryotic ribosomal protein eS4 family.

The protein is Small ribosomal subunit protein eS4 of Caldivirga maquilingensis (strain ATCC 700844 / DSM 13496 / JCM 10307 / IC-167).